The chain runs to 176 residues: NADH-quinone oxidoreductase subunit B 1 (176 aa).

[4Fe-4S] cluster is bound by residues Cys-55, Cys-56, Cys-120, and Cys-150.

Belongs to the complex I 20 kDa subunit family. As to quaternary structure, NDH-1 is composed of 14 different subunits. Subunits NuoB, C, D, E, F, and G constitute the peripheral sector of the complex. [4Fe-4S] cluster serves as cofactor.

The protein localises to the cell inner membrane. It carries out the reaction a quinone + NADH + 5 H(+)(in) = a quinol + NAD(+) + 4 H(+)(out). NDH-1 shuttles electrons from NADH, via FMN and iron-sulfur (Fe-S) centers, to quinones in the respiratory chain. Couples the redox reaction to proton translocation (for every two electrons transferred, four hydrogen ions are translocated across the cytoplasmic membrane), and thus conserves the redox energy in a proton gradient. The protein is NADH-quinone oxidoreductase subunit B 1 of Cereibacter sphaeroides (strain ATCC 17029 / ATH 2.4.9) (Rhodobacter sphaeroides).